Reading from the N-terminus, the 146-residue chain is Large ribosomal subunit protein uL15 (146 aa).

A disordered region spans residues 1–45; sequence MTIKLHHLRPAPGSKTERTRVGRGEGSKGKTAGRGTKGTKARKNV. Basic and acidic residues predominate over residues 15-28; the sequence is KTERTRVGRGEGSK.

Belongs to the universal ribosomal protein uL15 family. In terms of assembly, part of the 50S ribosomal subunit.

Functionally, binds to the 23S rRNA. In Mycobacteroides abscessus (strain ATCC 19977 / DSM 44196 / CCUG 20993 / CIP 104536 / JCM 13569 / NCTC 13031 / TMC 1543 / L948) (Mycobacterium abscessus), this protein is Large ribosomal subunit protein uL15.